A 113-amino-acid chain; its full sequence is Colipase (113 aa).

A signal peptide spans 1-18 (MEKVLVLLLVSLLAVAYA). A propeptide spans 19–23 (APGPR) (enterostatin, activation peptide). 5 disulfide bridges follow: Cys-35/Cys-46, Cys-41/Cys-57, Cys-45/Cys-79, Cys-67/Cys-87, and Cys-81/Cys-105.

This sequence belongs to the colipase family. Forms a 1:1 stoichiometric complex with pancreatic lipase. In terms of tissue distribution, expressed by the pancreas.

Its subcellular location is the secreted. Its function is as follows. Colipase is a cofactor of pancreatic lipase. It allows the lipase to anchor itself to the lipid-water interface. Without colipase the enzyme is washed off by bile salts, which have an inhibitory effect on the lipase. Functionally, enterostatin has a biological activity as a satiety signal. In Mus musculus (Mouse), this protein is Colipase.